Consider the following 151-residue polypeptide: GTP-dependent dephospho-CoA kinase (151 aa).

GTP-binding residues include Asp30, Val31, Asp49, Lys51, and Glu104.

The protein belongs to the GTP-dependent DPCK family.

It catalyses the reaction 3'-dephospho-CoA + GTP = GDP + CoA + H(+). The protein operates within cofactor biosynthesis; coenzyme A biosynthesis. Functionally, catalyzes the GTP-dependent phosphorylation of the 3'-hydroxyl group of dephosphocoenzyme A to form coenzyme A (CoA). The protein is GTP-dependent dephospho-CoA kinase of Cenarchaeum symbiosum (strain A).